A 553-amino-acid polypeptide reads, in one-letter code: Undecaprenyl phosphate-alpha-4-amino-4-deoxy-L-arabinose arabinosyl transferase (553 aa).

12 consecutive transmembrane segments (helical) span residues 8–28, 83–103, 111–131, 132–152, 176–196, 204–224, 255–275, 288–308, 317–337, 350–370, 380–400, and 407–427; these read LVLL…RALW, VRFG…WLAF, VAVL…VGTY, AVLD…FWLG, VMTK…PWVI, VLLF…PWAL, APFW…VALL, IESG…FFSI, ILPC…QLVA, TVFG…WGIA, VLKV…GYLT, and LWQW…GMIP.

The protein belongs to the glycosyltransferase 83 family.

The protein resides in the cell inner membrane. It catalyses the reaction 4-amino-4-deoxy-alpha-L-arabinopyranosyl di-trans,octa-cis-undecaprenyl phosphate + lipid IVA = lipid IIA + di-trans,octa-cis-undecaprenyl phosphate.. It functions in the pathway lipopolysaccharide metabolism; 4-amino-4-deoxy-beta-L-arabinose-lipid A biosynthesis. In terms of biological role, catalyzes the transfer of the L-Ara4N moiety of the glycolipid undecaprenyl phosphate-alpha-L-Ara4N to lipid A. The modified arabinose is attached to lipid A and is required for resistance to polymyxin and cationic antimicrobial peptides. The sequence is that of Undecaprenyl phosphate-alpha-4-amino-4-deoxy-L-arabinose arabinosyl transferase from Enterobacter sp. (strain 638).